The following is a 313-amino-acid chain: 4-hydroxy-3-methylbut-2-enyl diphosphate reductase (313 aa).

Residue Cys12 coordinates [4Fe-4S] cluster. The (2E)-4-hydroxy-3-methylbut-2-enyl diphosphate site is built by His41 and His74. 2 residues coordinate dimethylallyl diphosphate: His41 and His74. Residues His41 and His74 each coordinate isopentenyl diphosphate. A [4Fe-4S] cluster-binding site is contributed by Cys96. His124 provides a ligand contact to (2E)-4-hydroxy-3-methylbut-2-enyl diphosphate. Residue His124 participates in dimethylallyl diphosphate binding. His124 serves as a coordination point for isopentenyl diphosphate. The active-site Proton donor is the Glu126. Thr167 is a (2E)-4-hydroxy-3-methylbut-2-enyl diphosphate binding site. Residue Cys197 participates in [4Fe-4S] cluster binding. (2E)-4-hydroxy-3-methylbut-2-enyl diphosphate contacts are provided by Ser225, Ser226, Asn227, and Ser269. Residues Ser225, Ser226, Asn227, and Ser269 each contribute to the dimethylallyl diphosphate site. Isopentenyl diphosphate-binding residues include Ser225, Ser226, Asn227, and Ser269.

It belongs to the IspH family. [4Fe-4S] cluster is required as a cofactor.

The enzyme catalyses isopentenyl diphosphate + 2 oxidized [2Fe-2S]-[ferredoxin] + H2O = (2E)-4-hydroxy-3-methylbut-2-enyl diphosphate + 2 reduced [2Fe-2S]-[ferredoxin] + 2 H(+). It carries out the reaction dimethylallyl diphosphate + 2 oxidized [2Fe-2S]-[ferredoxin] + H2O = (2E)-4-hydroxy-3-methylbut-2-enyl diphosphate + 2 reduced [2Fe-2S]-[ferredoxin] + 2 H(+). It functions in the pathway isoprenoid biosynthesis; dimethylallyl diphosphate biosynthesis; dimethylallyl diphosphate from (2E)-4-hydroxy-3-methylbutenyl diphosphate: step 1/1. It participates in isoprenoid biosynthesis; isopentenyl diphosphate biosynthesis via DXP pathway; isopentenyl diphosphate from 1-deoxy-D-xylulose 5-phosphate: step 6/6. Functionally, catalyzes the conversion of 1-hydroxy-2-methyl-2-(E)-butenyl 4-diphosphate (HMBPP) into a mixture of isopentenyl diphosphate (IPP) and dimethylallyl diphosphate (DMAPP). Acts in the terminal step of the DOXP/MEP pathway for isoprenoid precursor biosynthesis. In Photobacterium profundum (strain SS9), this protein is 4-hydroxy-3-methylbut-2-enyl diphosphate reductase.